A 587-amino-acid polypeptide reads, in one-letter code: Glutamine--tRNA ligase (587 aa).

Residues 58-68 (PEPNGYLHIGH) carry the 'HIGH' region motif. ATP-binding positions include 59–61 (EPN) and 65–71 (HIGHAKS). 2 residues coordinate L-glutamine: Asp-91 and Tyr-240. ATP-binding positions include Thr-259 and 294–295 (RL). Residues 301–305 (VTSKR) carry the 'KMSKS' region motif.

The protein belongs to the class-I aminoacyl-tRNA synthetase family. Monomer.

It localises to the cytoplasm. It carries out the reaction tRNA(Gln) + L-glutamine + ATP = L-glutaminyl-tRNA(Gln) + AMP + diphosphate. This chain is Glutamine--tRNA ligase, found in Bordetella bronchiseptica (strain ATCC BAA-588 / NCTC 13252 / RB50) (Alcaligenes bronchisepticus).